A 156-amino-acid chain; its full sequence is Deoxyuridine 5'-triphosphate nucleotidohydrolase (156 aa).

Substrate-binding positions include 76 to 78 (RSG), Asn-89, 93 to 95 (TVD), and Lys-103.

The protein belongs to the dUTPase family. It depends on Mg(2+) as a cofactor.

It carries out the reaction dUTP + H2O = dUMP + diphosphate + H(+). The protein operates within pyrimidine metabolism; dUMP biosynthesis; dUMP from dCTP (dUTP route): step 2/2. In terms of biological role, this enzyme is involved in nucleotide metabolism: it produces dUMP, the immediate precursor of thymidine nucleotides and it decreases the intracellular concentration of dUTP so that uracil cannot be incorporated into DNA. The protein is Deoxyuridine 5'-triphosphate nucleotidohydrolase of Rhizobium rhizogenes (strain K84 / ATCC BAA-868) (Agrobacterium radiobacter).